The chain runs to 109 residues: Ribonuclease P protein component (109 aa).

The protein belongs to the RnpA family. In terms of assembly, consists of a catalytic RNA component (M1 or rnpB) and a protein subunit.

The enzyme catalyses Endonucleolytic cleavage of RNA, removing 5'-extranucleotides from tRNA precursor.. Its function is as follows. RNaseP catalyzes the removal of the 5'-leader sequence from pre-tRNA to produce the mature 5'-terminus. It can also cleave other RNA substrates such as 4.5S RNA. The protein component plays an auxiliary but essential role in vivo by binding to the 5'-leader sequence and broadening the substrate specificity of the ribozyme. The protein is Ribonuclease P protein component of Streptococcus agalactiae serotype Ia (strain ATCC 27591 / A909 / CDC SS700).